We begin with the raw amino-acid sequence, 175 residues long: Inosine/xanthosine triphosphatase (175 aa).

Substrate is bound at residue 8–13; the sequence is TTNPAK. Positions 38 and 68 each coordinate Mg(2+). 68 to 69 lines the substrate pocket; it reads EA.

This sequence belongs to the YjjX NTPase family. Homodimer. Requires Mg(2+) as cofactor. Mn(2+) is required as a cofactor.

It catalyses the reaction XTP + H2O = XDP + phosphate + H(+). It carries out the reaction ITP + H2O = IDP + phosphate + H(+). In terms of biological role, phosphatase that hydrolyzes non-canonical purine nucleotides such as XTP and ITP to their respective diphosphate derivatives. Probably excludes non-canonical purines from DNA/RNA precursor pool, thus preventing their incorporation into DNA/RNA and avoiding chromosomal lesions. The chain is Inosine/xanthosine triphosphatase from Yersinia enterocolitica serotype O:8 / biotype 1B (strain NCTC 13174 / 8081).